Reading from the N-terminus, the 163-residue chain is Cytochrome c-type biogenesis protein CcmE (163 aa).

At 1–8 (MNPRRKKR) the chain is on the cytoplasmic side. A helical; Signal-anchor for type II membrane protein transmembrane segment spans residues 9 to 29 (LTIILAISAGLAAVIGLVLYA). Residues 30–163 (LSQNIDLFYT…TEAQLKGAKQ (134 aa)) lie on the Periplasmic side of the membrane. 2 residues coordinate heme: His131 and Tyr135.

The protein belongs to the CcmE/CycJ family.

It localises to the cell inner membrane. Its function is as follows. Heme chaperone required for the biogenesis of c-type cytochromes. Transiently binds heme delivered by CcmC and transfers the heme to apo-cytochromes in a process facilitated by CcmF and CcmH. This Aeromonas salmonicida (strain A449) protein is Cytochrome c-type biogenesis protein CcmE.